The sequence spans 421 residues: Gamma-glutamyl phosphate reductase (421 aa).

Belongs to the gamma-glutamyl phosphate reductase family.

It is found in the cytoplasm. The catalysed reaction is L-glutamate 5-semialdehyde + phosphate + NADP(+) = L-glutamyl 5-phosphate + NADPH + H(+). It functions in the pathway amino-acid biosynthesis; L-proline biosynthesis; L-glutamate 5-semialdehyde from L-glutamate: step 2/2. In terms of biological role, catalyzes the NADPH-dependent reduction of L-glutamate 5-phosphate into L-glutamate 5-semialdehyde and phosphate. The product spontaneously undergoes cyclization to form 1-pyrroline-5-carboxylate. This is Gamma-glutamyl phosphate reductase from Pseudomonas savastanoi pv. phaseolicola (strain 1448A / Race 6) (Pseudomonas syringae pv. phaseolicola (strain 1448A / Race 6)).